The chain runs to 444 residues: Phosphoglucosamine mutase (444 aa).

Residue Ser-101 is the Phosphoserine intermediate of the active site. Residues Ser-101, Asp-239, Asp-241, and Asp-243 each coordinate Mg(2+). Ser-101 is subject to Phosphoserine.

Belongs to the phosphohexose mutase family. Requires Mg(2+) as cofactor. In terms of processing, activated by phosphorylation.

The catalysed reaction is alpha-D-glucosamine 1-phosphate = D-glucosamine 6-phosphate. Catalyzes the conversion of glucosamine-6-phosphate to glucosamine-1-phosphate. The protein is Phosphoglucosamine mutase of Alcanivorax borkumensis (strain ATCC 700651 / DSM 11573 / NCIMB 13689 / SK2).